Reading from the N-terminus, the 588-residue chain is ustiloxin B cluster transcription factor ustR (588 aa).

Residues 11 to 38 (CWTCRLRRKKCNEDGQPCSNCEARGVFC) constitute a DNA-binding region (zn(2)-C6 fungal-type). The interval 68 to 92 (RTRRARATPTNSINGEPRRPSIDMN) is disordered.

Its subcellular location is the nucleus. Functionally, transcription factor that regulates the expression of the gene cluster that mediates the biosynthesis of ustiloxin B, an antimitotic tetrapeptide. The sequence is that of ustiloxin B cluster transcription factor ustR from Aspergillus flavus (strain ATCC 200026 / FGSC A1120 / IAM 13836 / NRRL 3357 / JCM 12722 / SRRC 167).